Here is a 184-residue protein sequence, read N- to C-terminus: uncharacterized protein (184 aa).

Residues 72–135 (RKSQAILLIG…GIALGSAVKV (64 aa)) form the 4Fe-4S domain. Residues Cys-92, Cys-95, Cys-100, and Cys-118 each contribute to the [4Fe-4S] cluster site.

It depends on [4Fe-4S] cluster as a cofactor.

This is an uncharacterized protein from Archaeoglobus fulgidus (strain ATCC 49558 / DSM 4304 / JCM 9628 / NBRC 100126 / VC-16).